The sequence spans 334 residues: Fructose-1,6-bisphosphatase class 1 (334 aa).

Positions 89, 112, 114, and 115 each coordinate Mg(2+). Substrate-binding positions include 115–118 (DGSS), asparagine 208, tyrosine 241, 259–261 (YLY), and lysine 271. Glutamate 277 is a Mg(2+) binding site.

Belongs to the FBPase class 1 family. Homotetramer. Mg(2+) is required as a cofactor.

The protein resides in the cytoplasm. The catalysed reaction is beta-D-fructose 1,6-bisphosphate + H2O = beta-D-fructose 6-phosphate + phosphate. It functions in the pathway carbohydrate biosynthesis; gluconeogenesis. The chain is Fructose-1,6-bisphosphatase class 1 from Pectobacterium atrosepticum (strain SCRI 1043 / ATCC BAA-672) (Erwinia carotovora subsp. atroseptica).